The following is a 166-amino-acid chain: Interferon gamma (166 aa).

The N-terminal stretch at 1–23 (MNYTSFILAFQLCAILGSSTYYC) is a signal peptide. Gln-24 carries the pyrrolidone carboxylic acid modification. 2 N-linked (GlcNAc...) asparagine glycosylation sites follow: Asn-39 and Asn-106. The interval 147–166 (ANLRKRKRSQNPFRGRRALQ) is disordered. Residues 148-166 (NLRKRKRSQNPFRGRRALQ) show a composition bias toward basic residues.

The protein belongs to the type II (or gamma) interferon family. As to quaternary structure, homodimer. Interacts with IFNGR1 (via extracellular domain); this interaction promotes IFNGR1 dimerization. In terms of tissue distribution, released primarily from activated T lymphocytes.

Its subcellular location is the secreted. Type II interferon produced by immune cells such as T-cells and NK cells that plays crucial roles in antimicrobial, antiviral, and antitumor responses by activating effector immune cells and enhancing antigen presentation. Primarily signals through the JAK-STAT pathway after interaction with its receptor IFNGR1 to affect gene regulation. Upon IFNG binding, IFNGR1 intracellular domain opens out to allow association of downstream signaling components JAK2, JAK1 and STAT1, leading to STAT1 activation, nuclear translocation and transcription of IFNG-regulated genes. Many of the induced genes are transcription factors such as IRF1 that are able to further drive regulation of a next wave of transcription. Plays a role in class I antigen presentation pathway by inducing a replacement of catalytic proteasome subunits with immunoproteasome subunits. In turn, increases the quantity, quality, and repertoire of peptides for class I MHC loading. Increases the efficiency of peptide generation also by inducing the expression of activator PA28 that associates with the proteasome and alters its proteolytic cleavage preference. Up-regulates as well MHC II complexes on the cell surface by promoting expression of several key molecules such as cathepsins B/CTSB, H/CTSH, and L/CTSL. Participates in the regulation of hematopoietic stem cells during development and under homeostatic conditions by affecting their development, quiescence, and differentiation. This is Interferon gamma (IFNG) from Equus asinus (Donkey).